A 245-amino-acid polypeptide reads, in one-letter code: Thiopurine S-methyltransferase (245 aa).

29–40 (WQEKWVNHKTGF) is an S-adenosyl-L-methionine binding site. Substrate is bound at residue Phe-40. The residue at position 58 (Lys-58) is an N6-acetyllysine. Residues Leu-69, Glu-90, and Arg-152 each contribute to the S-adenosyl-L-methionine site.

It belongs to the class I-like SAM-binding methyltransferase superfamily. TPMT family. In terms of assembly, monomer.

Its subcellular location is the cytoplasm. It carries out the reaction S-adenosyl-L-methionine + a thiopurine = S-adenosyl-L-homocysteine + a thiopurine S-methylether.. The polypeptide is Thiopurine S-methyltransferase (TPMT) (Bos taurus (Bovine)).